A 104-amino-acid chain; its full sequence is ATP-dependent Clp protease adapter protein ClpS (104 aa).

Belongs to the ClpS family. Binds to the N-terminal domain of the chaperone ClpA.

Functionally, involved in the modulation of the specificity of the ClpAP-mediated ATP-dependent protein degradation. This is ATP-dependent Clp protease adapter protein ClpS from Burkholderia ambifaria (strain MC40-6).